The chain runs to 106 residues: U1-lycotoxin-Ls1b (106 aa).

The first 19 residues, 1–19 (MKVLVVVALLVTLISYSSS), serve as a signal peptide directing secretion. The propeptide occupies 20-40 (EGIDDPEADELLSLMANEQTR). 4 disulfide bridges follow: Cys43-Cys58, Cys50-Cys67, Cys57-Cys85, and Cys69-Cys83.

The protein belongs to the neurotoxin 19 (CSTX) family. 04 (U1-Lctx) subfamily. In terms of tissue distribution, expressed by the venom gland.

The protein localises to the secreted. This is U1-lycotoxin-Ls1b from Lycosa singoriensis (Wolf spider).